The sequence spans 320 residues: uncharacterized protein (320 aa).

A run of 7 helical transmembrane segments spans residues 24-44 (FEFSVHGTCVVFNLFLCIFFI), 65-85 (FVLSLPLFFLQFYLVVFLWSL), 105-125 (TTSCAQVLPLAVAIYRYFIVV), 132-152 (SWFVVVVHSIISFIFFVIAIL), 179-199 (ISLTLGLNLFAVFINVAIYTF), 226-246 (MIPILVSIPLLVGSFDFYFGY), and 253-275 (TSRWYATTFLSPLLTPISSMLSL).

The protein localises to the membrane. This is an uncharacterized protein from Caenorhabditis elegans.